A 162-amino-acid polypeptide reads, in one-letter code: Onchocystatin (162 aa).

The first 32 residues, 1–32 (MLTIKDGTLLIHLLLFSVVALVQLQGAKSARA), serve as a signal peptide directing secretion. Residues 30–54 (ARAKNPSKMESKTGENQDRPVLLGG) are disordered. Basic and acidic residues predominate over residues 36–47 (SKMESKTGENQD). The Secondary area of contact motif lies at 97 to 101 (QVVAG). An intrachain disulfide couples cysteine 115 to cysteine 128.

It belongs to the cystatin family. In terms of tissue distribution, expressed in the cuticle of L3 and L4 larvae, female adult, and in the eggshell of developing microfilariae.

In terms of biological role, cysteine protease inhibitor which inhibits members of the peptidase C1 family. In the human host, inhibits CTSL/cathepsin L and CTSS/cathepsin S and to a lesser extent CTSB/cathepsin B which may cause defects in antigen processing and thereby impair antigen-driven T cell proliferation. This chain is Onchocystatin, found in Onchocerca volvulus.